Reading from the N-terminus, the 100-residue chain is Large ribosomal subunit protein uL23 (100 aa).

Belongs to the universal ribosomal protein uL23 family. As to quaternary structure, part of the 50S ribosomal subunit. Contacts protein L29, and trigger factor when it is bound to the ribosome.

In terms of biological role, one of the early assembly proteins it binds 23S rRNA. One of the proteins that surrounds the polypeptide exit tunnel on the outside of the ribosome. Forms the main docking site for trigger factor binding to the ribosome. The sequence is that of Large ribosomal subunit protein uL23 from Synechococcus sp. (strain CC9902).